Consider the following 280-residue polypeptide: uncharacterized protein (280 aa).

Transmembrane regions (helical) follow at residues 6-26 (YLVIILIIAGVISVLAFTPLV), 38-58 (VLAIVLFVYVFFGRQIIYLFP), 79-99 (IFLLDLCPFFAVIAPVFVFLK), 105-125 (GVLAVFGLFGALVTLFGELIF), 144-164 (NQIYFMMHFLSLLVSLAIILW), 171-191 (ISFFYIHVFALIYFSYVALMV), and 231-251 (LVFIVGFSLSYVAILLMTLFA).

Its subcellular location is the cell membrane. This is an uncharacterized protein from Mycoplasma genitalium (strain ATCC 33530 / DSM 19775 / NCTC 10195 / G37) (Mycoplasmoides genitalium).